A 735-amino-acid polypeptide reads, in one-letter code: Ribosomal RNA large subunit methyltransferase K/L (735 aa).

The THUMP domain maps to 45–156; that stretch reads DGYRACLWSR…RDSLSFSLDL (112 aa).

It belongs to the methyltransferase superfamily. RlmKL family.

It is found in the cytoplasm. The catalysed reaction is guanosine(2445) in 23S rRNA + S-adenosyl-L-methionine = N(2)-methylguanosine(2445) in 23S rRNA + S-adenosyl-L-homocysteine + H(+). The enzyme catalyses guanosine(2069) in 23S rRNA + S-adenosyl-L-methionine = N(2)-methylguanosine(2069) in 23S rRNA + S-adenosyl-L-homocysteine + H(+). Functionally, specifically methylates the guanine in position 2445 (m2G2445) and the guanine in position 2069 (m7G2069) of 23S rRNA. The polypeptide is Ribosomal RNA large subunit methyltransferase K/L (Allochromatium vinosum (strain ATCC 17899 / DSM 180 / NBRC 103801 / NCIMB 10441 / D) (Chromatium vinosum)).